Here is a 479-residue protein sequence, read N- to C-terminus: Anaerobic nitric oxide reductase flavorubredoxin (479 aa).

The interval leucine 30–isoleucine 210 is zinc metallo-hydrolase. Fe cation contacts are provided by histidine 79, glutamate 81, aspartate 83, histidine 147, aspartate 166, and histidine 227. The region spanning isoleucine 254–alanine 393 is the Flavodoxin-like domain. FMN contacts are provided by residues threonine 260–asparagine 264 and alanine 342–leucine 369. The Rubredoxin-like domain occupies glycine 423 to leucine 474. 4 residues coordinate Fe cation: cysteine 428, cysteine 431, cysteine 461, and cysteine 464.

In the N-terminal section; belongs to the zinc metallo-hydrolase group 3 family. Homotetramer. Fe cation serves as cofactor. The cofactor is FMN.

The protein resides in the cytoplasm. It functions in the pathway nitrogen metabolism; nitric oxide reduction. Functionally, anaerobic nitric oxide reductase; uses NADH to detoxify nitric oxide (NO), protecting several 4Fe-4S NO-sensitive enzymes. Has at least 2 reductase partners, only one of which (NorW, flavorubredoxin reductase) has been identified. NO probably binds to the di-iron center; electrons enter from the NorW at rubredoxin and are transferred sequentially to the FMN center and the di-iron center. Also able to function as an aerobic oxygen reductase. In Escherichia coli (strain UTI89 / UPEC), this protein is Anaerobic nitric oxide reductase flavorubredoxin.